We begin with the raw amino-acid sequence, 560 residues long: Hemocyanin, units G and H (560 aa).

Cys1 and Cys11 are oxidised to a cystine. Residues 1–184 (CPTPDAPQYA…AKGLVSQHIE (184 aa)) are unit G. The 2'-(S-cysteinyl)-histidine (Cys-His) cross-link spans 12–14 (CLH). Cys93 and Cys98 are disulfide-bonded. Asn142 is a glycosylation site (N-linked (GlcNAc...) asparagine). Residues 185-560 (DHDTETLIRK…KPGTGTQLTR (376 aa)) form a unit H region. His230 contacts Cu cation. Residues Cys236 and Cys246 are joined by a disulfide bond. A glycan (N-linked (GlcNAc...) asparagine) is linked at Asn240. Residues 247 to 249 (CQH) constitute a cross-link (2'-(S-cysteinyl)-histidine (Cys-His)). Cu cation-binding residues include His249, His258, His358, His362, and His389. Disulfide bonds link Cys348/Cys415 and Cys476/Cys482.

Belongs to the tyrosinase family. Hemocyanin subfamily. Decamers of large identical subunits (390 kDa), each containing 8 globular oxygen-binding functional units. It depends on Cu(2+) as a cofactor.

Its function is as follows. Hemocyanins are copper-containing oxygen carriers occurring freely dissolved in the hemolymph of many mollusks and arthropods. The chain is Hemocyanin, units G and H from Sepia officinalis (Common cuttlefish).